Reading from the N-terminus, the 112-residue chain is MADVSLKLSAKDIYEKDFEKTMARGYRREEVDAFLDDIITDYQKMADMNNEVVKLSEENNKLKKEVEELRLRVATSRPSDNKSFSSNNSSSSNNNVDILKRISNLEKAVFGK.

Residues 42–77 (YQKMADMNNEVVKLSEENNKLKKEVEELRLRVATSR) adopt a coiled-coil conformation. The segment at 75 to 97 (TSRPSDNKSFSSNNSSSSNNNVD) is disordered. Residues 81–95 (NKSFSSNNSSSSNNN) show a composition bias toward low complexity.

The protein belongs to the GpsB family. Forms polymers through the coiled coil domains. Interacts with PBP1, MreC and EzrA.

Its subcellular location is the cytoplasm. Functionally, divisome component that associates with the complex late in its assembly, after the Z-ring is formed, and is dependent on DivIC and PBP2B for its recruitment to the divisome. Together with EzrA, is a key component of the system that regulates PBP1 localization during cell cycle progression. Its main role could be the removal of PBP1 from the cell pole after pole maturation is completed. Also contributes to the recruitment of PBP1 to the division complex. Not essential for septum formation. In Staphylococcus haemolyticus (strain JCSC1435), this protein is Cell cycle protein GpsB.